The chain runs to 313 residues: Olfactory receptor 1J2 (313 aa).

The Extracellular portion of the chain corresponds to 1 to 25 (MSPENQSSVSEFLLLGLPIRPEQQA). N5 is a glycosylation site (N-linked (GlcNAc...) asparagine). A helical membrane pass occupies residues 26-49 (VFFTLFLGMYLTTVLGNLLIMLLI). The Cytoplasmic segment spans residues 50–57 (QLDSHLHT). Residues 58-79 (PMYFFLSHLALTDISFSSVTVP) form a helical membrane-spanning segment. The Extracellular portion of the chain corresponds to 80–100 (KMLMDMRTKYKSILYEECISQ). A disulfide bridge connects residues C97 and C189. A helical transmembrane segment spans residues 101–120 (MYFFIFFTDLDSFLITSMAY). Over 121 to 139 (DRYVAICHPLHYTVIMREE) the chain is Cytoplasmic. A helical transmembrane segment spans residues 140–158 (LCVFLVAVSWILSCASSLS). Topologically, residues 159–196 (HTLLLTRLSFCAANTIPHVFCDLAALLKLSCSDIFLNE) are extracellular. The helical transmembrane segment at 197-219 (LVMFTVGVVVITLPFMCILVSYG) threads the bilayer. At 220–236 (YIGATILRVPSTKGIHK) the chain is on the cytoplasmic side. The chain crosses the membrane as a helical span at residues 237–259 (ALSTCGSHLSVVSLYYGSIFGQY). The Extracellular segment spans residues 260–272 (LFPTVSSSIDKDV). Residues 273 to 292 (IVALMYTVVTPMLNPFIYSL) traverse the membrane as a helical segment. The Cytoplasmic segment spans residues 293 to 313 (RNRDMKEALGKLFSRATFFSW).

Belongs to the G-protein coupled receptor 1 family.

Its subcellular location is the cell membrane. Functionally, odorant receptor. The chain is Olfactory receptor 1J2 (OR1J2) from Homo sapiens (Human).